The primary structure comprises 192 residues: Xanthine phosphoribosyltransferase (192 aa).

The xanthine site is built by leucine 20 and asparagine 27. 128-132 serves as a coordination point for 5-phospho-alpha-D-ribose 1-diphosphate; the sequence is AHGEA. Lysine 156 contributes to the xanthine binding site.

This sequence belongs to the purine/pyrimidine phosphoribosyltransferase family. Xpt subfamily. In terms of assembly, homodimer.

The protein localises to the cytoplasm. It carries out the reaction XMP + diphosphate = xanthine + 5-phospho-alpha-D-ribose 1-diphosphate. Its pathway is purine metabolism; XMP biosynthesis via salvage pathway; XMP from xanthine: step 1/1. Its function is as follows. Converts the preformed base xanthine, a product of nucleic acid breakdown, to xanthosine 5'-monophosphate (XMP), so it can be reused for RNA or DNA synthesis. The polypeptide is Xanthine phosphoribosyltransferase (Lactobacillus acidophilus (strain ATCC 700396 / NCK56 / N2 / NCFM)).